A 439-amino-acid chain; its full sequence is N5-carboxyaminoimidazole ribonucleotide synthase (439 aa).

ATP is bound by residues Lys-113, Lys-160, 197-200 (EERV), Glu-205, and 283-284 (NE). Positions 117–313 (RRRLAALGAA…QFEQHLRAVL (197 aa)) constitute an ATP-grasp domain.

This sequence belongs to the PurK/PurT family. In terms of assembly, homodimer.

It catalyses the reaction 5-amino-1-(5-phospho-beta-D-ribosyl)imidazole + hydrogencarbonate + ATP = 5-carboxyamino-1-(5-phospho-D-ribosyl)imidazole + ADP + phosphate + 2 H(+). It functions in the pathway purine metabolism; IMP biosynthesis via de novo pathway; 5-amino-1-(5-phospho-D-ribosyl)imidazole-4-carboxylate from 5-amino-1-(5-phospho-D-ribosyl)imidazole (N5-CAIR route): step 1/2. Its function is as follows. Catalyzes the ATP-dependent conversion of 5-aminoimidazole ribonucleotide (AIR) and HCO(3)(-) to N5-carboxyaminoimidazole ribonucleotide (N5-CAIR). This is N5-carboxyaminoimidazole ribonucleotide synthase from Mycobacterium leprae (strain TN).